A 296-amino-acid polypeptide reads, in one-letter code: Transmembrane protein 156 (296 aa).

Topologically, residues 1–4 are cytoplasmic; it reads MTKT. A helical transmembrane segment spans residues 5–25; it reads ALLKLFVAIVITFILILPEYF. The Extracellular portion of the chain corresponds to 26–211; the sequence is KTPKERTLEL…EMDIKNITCS (186 aa). Asn45 and Asn156 each carry an N-linked (GlcNAc...) asparagine glycan. The chain crosses the membrane as a helical span at residues 212-232; the sequence is MKITWYILVLLVFIFLIILTI. At 233 to 296 the chain is on the cytoplasmic side; it reads RKILEGQRRV…QEVLPPIPEL (64 aa).

The protein resides in the membrane. The sequence is that of Transmembrane protein 156 (TMEM156) from Homo sapiens (Human).